Here is a 445-residue protein sequence, read N- to C-terminus: MAQSHSSSVNYFGSVNKVVFEGKASTNPLAFKYYNPQEVIGGKTMKEHLRFSIAYWHTFTADGTDVFGAATMQRPWDHYKGMDLARARVEAAFEMFEKLDAPFFAFHDRDIAPEGSTLKETNQNLDIIVGMIKDYMRDSNVKLLWNTANMFTNPRFVHGAATSCNADVFAYAAAQVKKGLETAKELGAENYVFWGGREGYETLLNTDLKFELDNLARFMHMAVDYAKEIEYTGQFLIEPKPKEPTTHQYDTDAATTIAFLKQYGLDNHFKLNLEANHATLAGHTFEHELRMARVHGLLGSVDANQGHPLLGWDTDEFPTDLYSTTLAMYEILQNGGLGSGGLNFDAKVRRSSFEPDDLVYAHIAGMDAFARGLKVAHKLIEDRVFEDVIQHRYRSFTEGIGLEITEGRANFHTLEQYALNNKTIKNESGRQERLKAILNQYILEV.

Active-site residues include H107 and D110. 7 residues coordinate Mg(2+): E238, E274, H277, D302, D313, D315, and D345.

It belongs to the xylose isomerase family. In terms of assembly, homotetramer. Mg(2+) is required as a cofactor.

The protein localises to the cytoplasm. It carries out the reaction alpha-D-xylose = alpha-D-xylulofuranose. The chain is Xylose isomerase (xylA) from Bacillus spizizenii (strain ATCC 23059 / NRRL B-14472 / W23) (Bacillus subtilis subsp. spizizenii).